The sequence spans 143 residues: Nitrosuccinic acid decarboxylase npaB (143 aa).

It belongs to the carboxymuconolactone decarboxylase family. Mg(2+) is required as a cofactor.

The protein operates within mycotoxin biosynthesis. Functionally, nitrosuccinic acid decarboxylase; part of the gene cluster that mediates the biosynthesis of the deadly neurotoxic nitroalkane 3-nitropropanoic acid (3-NPA) that acts as an antimetabolite of succinate and irreversibly inhibits succinate dehydrogenase and disrupts mitochondrial oxidative phosphorylation. NpaB facilitates decarboxylation of nitrosuccinic acid produced by the nitrosuccinic acid synthase npaA to yield the final product of the cluster, the lethal mycotoxin 3-NPA. The chain is Nitrosuccinic acid decarboxylase npaB from Metarhizium robertsii (strain ARSEF 23 / ATCC MYA-3075) (Metarhizium anisopliae (strain ARSEF 23)).